A 1051-amino-acid polypeptide reads, in one-letter code: Integrin alpha-3 (1051 aa).

Residues 1-32 form the signal peptide; it reads MGPGPRCAPGDPGWMLGALALMVAASGRFAFA. At 33 to 991 the chain is on the extracellular side; that stretch reads FNLDTRFLVV…LVEELPAEIE (959 aa). FG-GAP repeat units follow at residues 38-103, 110-171, 185-235, 236-292, 293-354, 356-411, and 415-477; these read RFLV…KDDC, EKSD…DLQL, CNSN…WDLS, EYSY…GGDL, KRKQ…TSFP, QPSL…GLLR, and QIVH…VARP. N-linked (GlcNAc...) asparagine glycosylation is present at asparagine 86. Intrachain disulfides connect cysteine 94/cysteine 103, cysteine 140/cysteine 162, and cysteine 185/cysteine 197. Ca(2+) is bound by residues aspartate 315, asparagine 317, aspartate 319, aspartate 323, aspartate 378, asparagine 380, aspartate 382, aspartate 386, aspartate 439, aspartate 441, asparagine 443, tyrosine 445, and aspartate 447. 2 cysteine pairs are disulfide-bonded: cysteine 485–cysteine 490 and cysteine 496–cysteine 550. Residues asparagine 500, asparagine 511, asparagine 573, and asparagine 605 are each glycosylated (N-linked (GlcNAc...) asparagine). Residues cysteine 615 and cysteine 621 are joined by a disulfide bond. Residues asparagine 656, asparagine 697, and asparagine 841 are each glycosylated (N-linked (GlcNAc...) asparagine). A disulfide bridge connects residues cysteine 694 and cysteine 702. 2 disulfide bridges follow: cysteine 846/cysteine 904 and cysteine 911/cysteine 916. The interval 860-888 is disordered; sequence LSDPGDKPHSPQRRRRQLDPGGDQGSPPV. Asparagine 923, asparagine 926, asparagine 935, and asparagine 969 each carry an N-linked (GlcNAc...) asparagine glycan. Residues 992-1019 form a helical membrane-spanning segment; that stretch reads LWLVLVAVSAGLLLLGLIIILLWKCGFF. The GFFKR motif signature appears at 1017–1021; the sequence is GFFKR. At 1020-1051 the chain is on the cytoplasmic side; the sequence is KRARTRALYEAKRQKAEMKSQPSETERLTDDY.

The protein belongs to the integrin alpha chain family. As to quaternary structure, heterodimer of an alpha and a beta subunit. The alpha subunit is composed of a heavy and a light chain linked by a disulfide bond. Alpha-3 associates with beta-1. Interacts with HPS5. Interacts with FAP (seprase); the interaction occurs at the cell surface of invadopodia membrane in a collagen-dependent manner. Isoform 1, but not isoform 2, is phosphorylated on serine residues.

The protein localises to the cell membrane. It localises to the cell projection. It is found in the invadopodium membrane. The protein resides in the filopodium membrane. Its function is as follows. Integrin alpha-3/beta-1 is a receptor for fibronectin, laminin, collagen, epiligrin, thrombospondin and CSPG4. Integrin alpha-3/beta-1 provides a docking site for FAP (seprase) at invadopodia plasma membranes in a collagen-dependent manner and hence may participate in the adhesion, formation of invadopodia and matrix degradation processes, promoting cell invasion. Alpha-3/beta-1 may mediate with LGALS3 the stimulation by CSPG4 of endothelial cells migration. The chain is Integrin alpha-3 (ITGA3) from Cricetulus griseus (Chinese hamster).